We begin with the raw amino-acid sequence, 134 residues long: Transcription factor atoh7 (134 aa).

The disordered stretch occupies residues 1-27; the sequence is MKPRRPSCADSGSDSDSRDPEKFESAM. Residues 15 to 27 show a composition bias toward basic and acidic residues; that stretch reads SDSRDPEKFESAM. The 53-residue stretch at 28-80 folds into the bHLH domain; it reads RRRMAANARERKRMQGLNTAFDRLRKVVPQWGQDKKLSKYETLQMALSYIMAL.

It localises to the nucleus. The protein resides in the perikaryon. It is found in the cell projection. Its subcellular location is the axon. Its function is as follows. Transcription factor that binds to DNA at the consensus sequence 5'-CAG[GC]TG-3'. Involved in the differentiation of retinal ganglion cells, photoreceptor population and optic nerve development. Required for retinal circadian rhythm photoentrainment. This is Transcription factor atoh7 from Danio rerio (Zebrafish).